A 203-amino-acid polypeptide reads, in one-letter code: Thymidylate kinase (203 aa).

An ATP-binding site is contributed by 14–21; sequence GMDGIGKS.

It belongs to the thymidylate kinase family.

It catalyses the reaction dTMP + ATP = dTDP + ADP. Functionally, phosphorylation of dTMP to form dTDP in both de novo and salvage pathways of dTTP synthesis. This is Thymidylate kinase from Rickettsia typhi (strain ATCC VR-144 / Wilmington).